A 99-amino-acid chain; its full sequence is Plastocyanin (99 aa).

The Plastocyanin-like domain occupies 1–99 (VEVLMGGSGG…IGMSGIVTVN (99 aa)). The Cu cation site is built by His37, Cys84, His87, and Met92.

This sequence belongs to the plastocyanin family. Requires Cu(2+) as cofactor.

The protein resides in the plastid. It is found in the chloroplast thylakoid membrane. Participates in electron transfer between P700 and the cytochrome b6-f complex in photosystem I. The chain is Plastocyanin (PETE) from Ginkgo biloba (Ginkgo).